Reading from the N-terminus, the 168-residue chain is DAZ-associated protein 2 (168 aa).

The segment covering 1 to 13 (MNSKGQYPTQPTY) has biased composition (low complexity). Positions 1 to 25 (MNSKGQYPTQPTYPVQPPGNPVYPQ) are disordered. The short motif at 39 to 42 (PPAY) is the PPAY element. Ser-77 bears the Phosphoserine mark.

As to quaternary structure, interacts with SOX6. Interacts with DAZ1 and DAZL. Interacts with IL17RB. May interact with FAM168B. Interacts with INCA1. Interacts with EIF4G1 and EIF4G2. Interacts (via PPAY motif) with NEDD4 (via WW domains). Interacts with transcription factor TCF4; the interaction results in localization of DAZAP2 to the nucleus. Interacts with transcription factors TCF7 and TCF7L1. Interacts with transcription factor LEF1. Interacts with serine/threonine-protein kinase HIPK2; the interaction results in phosphorylation of DAZAP2 which causes localization of DAZAP2 to the nucleus, reduces interaction of DAZAP2 with HIPK2 and prevents DAZAP2-dependent degradation of HIPK2. Interacts with ubiquitin ligase SIAH1; the interaction is decreased following phosphorylation of DAZAP2 by HIPK2. Interacts with TP53; the interaction is triggered by DNA damage. In terms of processing, ubiquitinated by SMURF2, leading to proteasomal degradation. Ubiquitinated by NEDD4, leading to proteasomal degradation. Following DNA damage, phosphorylated by HIPK2 which promotes DAZAP2 localization to the nucleus, reduces interaction of DAZAP2 with HIPK2 and SIAH1, and prevents DAZAP2-dependent ubiquitination of HIPK2 by E3 ubiquitin-protein ligase SIAH1 and subsequent HIPK2 proteasomal degradation.

Its subcellular location is the cytoplasm. It is found in the nucleus. The protein resides in the nucleus speckle. The protein localises to the nuclear body. It localises to the stress granule. Its function is as follows. In unstressed cells, promotes SIAH1-mediated polyubiquitination and degradation of the serine/threonine-protein kinase HIPK2, probably by acting as a loading factor that potentiates complex formation between HIPK2 and ubiquitin ligase SIAH1. In response to DNA damage, localizes to the nucleus following phosphorylation by HIPK2 and modulates the expression of a subset of TP53/p53 target genes by binding to TP53 at target gene promoters. This limits the expression of a number of cell death-mediating TP53 target genes, reducing DNA damage-induced cell death. Enhances the binding of transcription factor TCF7L2/TCF4, a Wnt signaling pathway effector, to the promoters of target genes. Plays a role in stress granule formation. This is DAZ-associated protein 2 from Macaca fascicularis (Crab-eating macaque).